Consider the following 155-residue polypeptide: Small ribosomal subunit protein uS7c (155 aa).

It belongs to the universal ribosomal protein uS7 family. Part of the 30S ribosomal subunit.

The protein resides in the plastid. The protein localises to the chloroplast. In terms of biological role, one of the primary rRNA binding proteins, it binds directly to 16S rRNA where it nucleates assembly of the head domain of the 30S subunit. The protein is Small ribosomal subunit protein uS7c (rps7) of Lactoris fernandeziana.